The sequence spans 309 residues: Serine/threonine-protein phosphatase 2A catalytic subunit alpha isoform (309 aa).

The Mn(2+) site is built by Asp57, His59, Asp85, and Asn117. Asp57, His59, and Asp85 together coordinate Zn(2+). Fe(3+) is bound by residues Asp85 and Asn117. The active-site Proton donor is His118. 2 residues coordinate Mn(2+): His167 and His241. 2 residues coordinate Fe(3+): His167 and His241. Residue Tyr307 is modified to Phosphotyrosine. Residue Leu309 is modified to Leucine methyl ester.

It belongs to the PPP phosphatase family. PP-1 subfamily. In terms of assembly, PP2A consists of a common heterodimeric core enzyme composed of PPP2CA, a 36 kDa catalytic subunit (subunit C), and PPP2R1A, a 65 kDa constant regulatory subunit (PR65 or subunit A), that associates with a variety of regulatory subunits. Proteins that associate with the core dimer include three families of regulatory subunits B (the R2/B/PR55/B55, R3/B''/PR72/PR130/PR59 and R5/B'/B56 families), the 48 kDa variable regulatory subunit, viral proteins, and cell signaling molecules. Interacts with the PP2A A subunit PPP2R1A. Interacts with the regulatory subunit PPP2R2A. Interacts (via C-terminus) with PTPA. Interacts with NXN; the interaction is direct. Interacts with KCTD20. Interacts with BTBD10. Interacts with SGO1 and SGO2. Interacts with RAF1. Interaction with IGBP1 protects unassembled PPP2CA from degradative ubiquitination. Interacts with GSK3B (via C2 domain). Interacts with MFHAS1; retains PPP2CA into the cytoplasm and excludes it from the nucleus. Interacts with PABIR1/FAM122A. Interacts with ADCY8; interaction is phosphatase activity-dependent; antagonizes interaction between ADCY8 and calmodulin. Interacts with CRTC3 (when phosphorylated at 'Ser-391'). Interacts with SPRY2; the interaction is inhibited by TESK1 interaction with SPRY2, possibly by vesicular sequestration of SPRY2. Interacts with TRAF3IP3. Interacts with AMBRA1 (via PxP motifs); enhancing interaction between PPP2CA and MYC or FOXO3. Forms a complex with AMBRA1 and BECN1; AMBRA1 and BECN1 components of the complex regulate MYC stability via different pathways. Part of the core of STRIPAK complexes composed of PP2A catalytic and scaffolding subunits, the striatins (PP2A regulatory subunits), the striatin-associated proteins MOB4, STRIP1 and STRIP2, PDCD10 and members of the STE20 kinases, such as STK24 and STK26. Phosphatase component of the Integrator-PP2A (INTAC) complex, composed of the Integrator core complex and protein phosphatase 2A subunits PPP2CA and PPP2R1A. Mn(2+) is required as a cofactor. Fe(3+) serves as cofactor. It depends on Zn(2+) as a cofactor. Reversibly methyl esterified on Leu-309 by leucine carboxyl methyltransferase 1 (Lcmt1) and protein phosphatase methylesterase 1 (Ppme1). Carboxyl methylation influences the affinity of the catalytic subunit for the different regulatory subunits, thereby modulating the PP2A holoenzyme's substrate specificity, enzyme activity and cellular localization. In terms of processing, phosphorylation of either threonine (by autophosphorylation-activated protein kinase) or tyrosine results in inactivation of the phosphatase. Auto-dephosphorylation has been suggested as a mechanism for reactivation. Post-translationally, polyubiquitinated, leading to its degradation by the proteasome.

It localises to the cytoplasm. Its subcellular location is the nucleus. It is found in the chromosome. The protein resides in the centromere. The protein localises to the cytoskeleton. It localises to the spindle pole. It catalyses the reaction O-phospho-L-seryl-[protein] + H2O = L-seryl-[protein] + phosphate. The catalysed reaction is O-phospho-L-threonyl-[protein] + H2O = L-threonyl-[protein] + phosphate. With respect to regulation, inhibited by the interaction between PPP2R2A and ARPP19; this inhibition is enhanced when ARPP19 is phosphorylated. Inhibited by the interaction between PPP2R2A and PABIR1/FAM122A. Catalytic subunit of protein phosphatase 2A (PP2A), a serine/threonine phosphatase involved in the regulation of a wide variety of enzymes, signal transduction pathways, and cellular events. PP2A is the major phosphatase for microtubule-associated proteins (MAPs). PP2A can modulate the activity of phosphorylase B kinase casein kinase 2, mitogen-stimulated S6 kinase, and MAP-2 kinase. Cooperates with SGO2 to protect centromeric cohesin from separase-mediated cleavage in oocytes specifically during meiosis I. Can dephosphorylate various proteins, such as AXIN1, p53/TP53, PIM3, WEE1. Activates RAF1 by dephosphorylating it at 'Ser-259'. Mediates dephosphorylation of WEE1, preventing its ubiquitin-mediated proteolysis, increasing WEE1 protein levels, and promoting the G2/M checkpoint. Mediates dephosphorylation of MYC; promoting its ubiquitin-mediated proteolysis: interaction with AMBRA1 enhances interaction between PPP2CA and MYC. Mediates dephosphorylation of FOXO3; promoting its stabilization: interaction with AMBRA1 enhances interaction between PPP2CA and FOXO3. Catalyzes dephosphorylation of the pyrin domain of NLRP3, promoting assembly of the NLRP3 inflammasome. Together with RACK1 adapter, mediates dephosphorylation of AKT1 at 'Ser-473', preventing AKT1 activation and AKT-mTOR signaling pathway. Dephosphorylation of AKT1 is essential for regulatory T-cells (Treg) homeostasis and stability. Catalyzes dephosphorylation of PIM3, promotinh PIM3 ubiquitination and proteasomal degradation. Part of the striatin-interacting phosphatase and kinase (STRIPAK) complexes. STRIPAK complexes have critical roles in protein (de)phosphorylation and are regulators of multiple signaling pathways including Hippo, MAPK, nuclear receptor and cytoskeleton remodeling. Different types of STRIPAK complexes are involved in a variety of biological processes such as cell growth, differentiation, apoptosis, metabolism and immune regulation. Key mediator of a quality checkpoint during transcription elongation as part of the Integrator-PP2A (INTAC) complex. The INTAC complex drives premature transcription termination of transcripts that are unfavorably configured for transcriptional elongation: within the INTAC complex, PPP2CA catalyzes dephosphorylation of the C-terminal domain (CTD) of Pol II subunit POLR2A/RPB1 and SUPT5H/SPT5, thereby preventing transcriptional elongation. The polypeptide is Serine/threonine-protein phosphatase 2A catalytic subunit alpha isoform (Ppp2ca) (Rattus norvegicus (Rat)).